The primary structure comprises 147 residues: Protein phosphatase 1 regulatory subunit 14B (147 aa).

The interval 1–55 (MADSGTAGGAALAAPAPGPGSGGPGPRVYFQSPPGAAGEGPGGADDEGPVRRQGK) is disordered. Ala-2 is modified (N-acetylalanine). Residue Ser-21 is modified to Phosphoserine. Residue Tyr-29 is modified to Phosphotyrosine. Residue Ser-32 is modified to Phosphoserine. Thr-57 is subject to Phosphothreonine. The stretch at 61–103 (DRKELRKRLNLEEWILEQLTRLYDCQEEEIPELEIDVDELLDM) forms a coiled coil.

It belongs to the PP1 inhibitor family. In terms of processing, phosphorylated primarily on Thr-57 by PKC (in vitro). An unknown Ser is also phosphorylated by PKC (in vitro). As to expression, ubiquitous. Expressed at low levels.

The protein localises to the cytoplasm. Functionally, inhibitor of PPP1CA. Has over 50-fold higher inhibitory activity when phosphorylated. This is Protein phosphatase 1 regulatory subunit 14B (PPP1R14B) from Homo sapiens (Human).